Consider the following 740-residue polypeptide: MIAPDSQRLFGSFDEQFKDLKLDSVDTENNNTHGVSTILDSSPASVNNNTNGAVAASVNTVPGSTFRSNTPLLGGRHPLSRTSSLIDSIGIQRAASPFSSMKEPFIPQSSGVMSSSFWHGDHPESRVSTPVQQHPLLQRNESSSSFSYAANLGVNLSTHSLAVDITPLSTPTAAQSHVNLFPSSDIPPNMSMNGMSQLPAPVSVESSWRYIDTQGQIHGPFTTQMMSQWYIGGYFASTLQISRLGSTPETLGINDIFITLGELMTKLEKYDTDPFTTFDKLHVQTTSSDSINLNLAPYASGVAATGTIKATENDIFKPLTHDNIWDMDGGTTSKGVDIKLASATTISQTDESHKQEYKSTTMLEKGKKEKSESVAKALLDEQEKRNRELKRKEEARLSKKQKQKEDDLLKKQKEQKEQKEKEALEAEKQKKSEKTKKDTQTQTEGFKTSKDLPSLNSSSANPAPWASKVKVNNAIETSIKNGVSSTGKKKGEPLGLQQRNSKEEKQKEELKSVLNWANKSSLPSNQTIDIKSQFQKSPKGMKESSPLKELEDPNFIEEQKKLWEKVQSSSKQVKSTSSASTTTSSWTTVTSKGKAPIGTVVSPYSKTNTSLNSSLTAKTSTTSTTTTFASMNNVSPRQEFIKWCKSQMKLNSGITNNNVLELLLSLPTGPESKELIQETIYANSDVMDGRRFATEFIKRRVACEKQGDDPLSWNEALALSGNDDDGWEFQVVSKKKGRKH.

Phosphoserine occurs at positions 12 and 96. A Phosphothreonine modification is found at threonine 129. Positions 205 to 261 (ESSWRYIDTQGQIHGPFTTQMMSQWYIGGYFASTLQISRLGSTPETLGINDIFITLG) constitute a GYF domain. At threonine 311 the chain carries Phosphothreonine. 3 disordered regions span residues 346–510 (ISQT…KEEL), 523–548 (PSNQ…SPLK), and 567–592 (QSSS…VTSK). The segment covering 364-439 (EKGKKEKSES…KKSEKTKKDT (76 aa)) has biased composition (basic and acidic residues). Residues 369–440 (EKSESVAKAL…KSEKTKKDTQ (72 aa)) are a coiled coil. Residues 452 to 467 (LPSLNSSSANPAPWAS) show a composition bias toward low complexity. Residues 474–486 (AIETSIKNGVSST) show a composition bias toward polar residues. Over residues 500–510 (NSKEEKQKEEL) the composition is skewed to basic and acidic residues. Residues 523–536 (PSNQTIDIKSQFQK) show a composition bias toward polar residues. Serine 545 carries the post-translational modification Phosphoserine. Serine 602 bears the Phosphoserine mark.

This sequence belongs to the SMY2/mpd2 family. As to quaternary structure, interacts with EAP1 and MSL5 (via the GYP domain).

Its subcellular location is the cytoplasm. Functionally, suppressor of the MYO2 gene. The sequence is that of Protein SMY2 (SMY2) from Saccharomyces cerevisiae (strain ATCC 204508 / S288c) (Baker's yeast).